Here is a 228-residue protein sequence, read N- to C-terminus: 5'-methylthioadenosine/S-adenosylhomocysteine nucleosidase (228 aa).

Catalysis depends on E11, which acts as the Proton acceptor. Substrate-binding positions include G77, I151, and M172–E173. D196 acts as the Proton donor in catalysis.

This sequence belongs to the PNP/UDP phosphorylase family. MtnN subfamily.

It carries out the reaction S-adenosyl-L-homocysteine + H2O = S-(5-deoxy-D-ribos-5-yl)-L-homocysteine + adenine. The catalysed reaction is S-methyl-5'-thioadenosine + H2O = 5-(methylsulfanyl)-D-ribose + adenine. The enzyme catalyses 5'-deoxyadenosine + H2O = 5-deoxy-D-ribose + adenine. The protein operates within amino-acid biosynthesis; L-methionine biosynthesis via salvage pathway; S-methyl-5-thio-alpha-D-ribose 1-phosphate from S-methyl-5'-thioadenosine (hydrolase route): step 1/2. Its function is as follows. Catalyzes the irreversible cleavage of the glycosidic bond in both 5'-methylthioadenosine (MTA) and S-adenosylhomocysteine (SAH/AdoHcy) to adenine and the corresponding thioribose, 5'-methylthioribose and S-ribosylhomocysteine, respectively. Also cleaves 5'-deoxyadenosine, a toxic by-product of radical S-adenosylmethionine (SAM) enzymes, into 5-deoxyribose and adenine. The polypeptide is 5'-methylthioadenosine/S-adenosylhomocysteine nucleosidase (Staphylococcus haemolyticus (strain JCSC1435)).